Reading from the N-terminus, the 919-residue chain is Envelope glycoprotein B (919 aa).

The N-terminal stretch at 1–28 is a signal peptide; sequence MSKDSTSLGVRTIVIACLVLLGCCIVEA. At 29 to 788 the chain is on the virion surface side; it reads VPTTPSSQPS…SGIASFINNP (760 aa). Disulfide bonds link C81/C586, C98/C542, C172/C237, C330/C378, and C607/C647. N-linked (GlcNAc...) asparagine; by host glycosylation occurs at N106. The segment at 138-144 is involved in fusion and/or binding to host membrane; sequence VWKGYSH. An N-linked (GlcNAc...) asparagine; by host glycan is attached at N216. The involved in fusion and/or binding to host membrane stretch occupies residues 223-231; that stretch reads GWMPWRHYT. N-linked (GlcNAc...) asparagine; by host glycans are attached at residues N321, N364, N438, N456, N493, N496, and N499. 2 N-linked (GlcNAc...) asparagine; by host glycosylation sites follow: N666 and N688. Hydrophobic membrane proximal region stretches follow at residues 733-786 and 765-785; these read IDSV…SFIN and TLVL…ASFI. A helical membrane pass occupies residues 789 to 809; the sequence is FGGLAIGLLVIAGLVAAFFAY. The Intravirion segment spans residues 810-919; it reads RYVMQLRSNP…DDPMESEKMV (110 aa). The short motif at 864 to 867 is the Golgi targeting element; it reads YMSM. Residues 900 to 919 form a disordered region; it reads RGPKYTRLREDDPMESEKMV. The short motif at 904-907 is the Internalization motif element; that stretch reads YTRL. The span at 906 to 919 shows a compositional bias: basic and acidic residues; it reads RLREDDPMESEKMV.

This sequence belongs to the herpesviridae glycoprotein B family. Homotrimer; disulfide-linked. Binds to heparan sulfate proteoglycans. Interacts with gH/gL heterodimer. A proteolytic cleavage by host furin generates two subunits that remain linked by disulfide bonds.

It is found in the virion membrane. The protein resides in the host cell membrane. Its subcellular location is the host endosome membrane. It localises to the host Golgi apparatus membrane. Its function is as follows. Envelope glycoprotein that forms spikes at the surface of virion envelope. Essential for the initial attachment to heparan sulfate moieties of the host cell surface proteoglycans. Involved in fusion of viral and cellular membranes leading to virus entry into the host cell. Following initial binding to its host receptors, membrane fusion is mediated by the fusion machinery composed at least of gB and the heterodimer gH/gL. May be involved in the fusion between the virion envelope and the outer nuclear membrane during virion egress. The protein is Envelope glycoprotein B of Equus caballus (Horse).